A 784-amino-acid chain; its full sequence is Cas scaffolding protein family member 4 (784 aa).

The SH3 domain occupies 11–73 (PKALLARALY…PANRLQILEE (63 aa)). Residues serine 197, serine 246, serine 302, serine 373, and serine 387 each carry the phosphoserine modification. The interval 343-376 (TPNIYDVPRAMPDVPQAGKELGKAGGPSENSVDH) is disordered. A coiled-coil region spans residues 466–536 (RDSLEANIDA…LLETKERLES (71 aa)). Residues 614-635 (KEGESYQRKAPFQKQRASEQPP) form a disordered region.

Belongs to the CAS family. Interacts (via SH3 domain) with PTK2/FAK1 (via C-terminus). Phosphorylated on tyrosines by SRC.

The protein resides in the cytoplasm. It is found in the cytoskeleton. Its subcellular location is the cell junction. The protein localises to the focal adhesion. In terms of biological role, docking protein that plays a role in tyrosine kinase-based signaling related to cell adhesion and cell spreading. Regulates PTK2/FAK1 activity, focal adhesion integrity, and cell spreading. This chain is Cas scaffolding protein family member 4, found in Sus scrofa (Pig).